Reading from the N-terminus, the 1269-residue chain is DNA-directed RNA polymerase subunit beta (1269 aa).

It belongs to the RNA polymerase beta chain family. As to quaternary structure, the RNAP catalytic core consists of 2 alpha, 1 beta, 1 beta' and 1 omega subunit. When a sigma factor is associated with the core the holoenzyme is formed, which can initiate transcription.

The catalysed reaction is RNA(n) + a ribonucleoside 5'-triphosphate = RNA(n+1) + diphosphate. Functionally, DNA-dependent RNA polymerase catalyzes the transcription of DNA into RNA using the four ribonucleoside triphosphates as substrates. This Porphyromonas gingivalis (strain ATCC BAA-308 / W83) protein is DNA-directed RNA polymerase subunit beta.